Here is a 78-residue protein sequence, read N- to C-terminus: MVRVIGSLVFGGLILLLASSNAHMVETRFGPLIMLAPHFVVLGITFFLGFAIGIVLVFANVMKRRKHKLPGKNIVIKR.

An N-terminal signal peptide occupies residues 1–22 (MVRVIGSLVFGGLILLLASSNA). Residues 23–38 (HMVETRFGPLIMLAPH) lie on the Lumenal side of the membrane. The helical transmembrane segment at 39–59 (FVVLGITFFLGFAIGIVLVFA) threads the bilayer. Residues 60–78 (NVMKRRKHKLPGKNIVIKR) are Cytoplasmic-facing.

Belongs to the magnetosome MamL family.

The protein resides in the magnetosome membrane. In terms of biological role, involved in magnetite crystal maturation, but not in magnetosome vesicle tubulation or formation. One of 7 genes (mamLQBIEMO) able to induce magnetosome membrane biogenesis; coexpression of mamLQRBIEMO in a deletion of the 17 gene mamAB operon restores magnetosome vesicle formation but not magnetite biosynthesis. In Magnetospirillum gryphiswaldense (strain DSM 6361 / JCM 21280 / NBRC 15271 / MSR-1), this protein is Magnetosome protein MamL.